Here is a 122-residue protein sequence, read N- to C-terminus: Large ribosomal subunit protein bL12 (122 aa).

It belongs to the bacterial ribosomal protein bL12 family. As to quaternary structure, homodimer. Part of the ribosomal stalk of the 50S ribosomal subunit. Forms a multimeric L10(L12)X complex, where L10 forms an elongated spine to which 2 to 4 L12 dimers bind in a sequential fashion. Binds GTP-bound translation factors.

Forms part of the ribosomal stalk which helps the ribosome interact with GTP-bound translation factors. Is thus essential for accurate translation. The sequence is that of Large ribosomal subunit protein bL12 from Cellvibrio japonicus (strain Ueda107) (Pseudomonas fluorescens subsp. cellulosa).